The sequence spans 251 residues: uncharacterized protein (251 aa).

The protein belongs to the FAM243 family.

This is an uncharacterized protein from Homo sapiens (Human).